The following is a 470-amino-acid chain: Serine/threonine-protein kinase PEPKR2 (470 aa).

The region spanning 107–355 (YVFGRNIGKG…ADEVLRHPWI (249 aa)) is the Protein kinase domain. ATP contacts are provided by residues 113-121 (IGKGKFGSV) and K136. D224 acts as the Proton acceptor in catalysis. Over residues 377–386 (GSSTCLQNRS) the composition is skewed to polar residues. Disordered regions lie at residues 377–419 (GSST…EEED) and 441–464 (RSRV…TSTS). A compositionally biased stretch (basic and acidic residues) spans 387-403 (PTEKTDLNRADREKKIP). The span at 445–464 (CSPTNNPIEQQHSSNLTSTS) shows a compositional bias: polar residues.

Belongs to the protein kinase superfamily. Ser/Thr protein kinase family.

The enzyme catalyses L-seryl-[protein] + ATP = O-phospho-L-seryl-[protein] + ADP + H(+). The catalysed reaction is L-threonyl-[protein] + ATP = O-phospho-L-threonyl-[protein] + ADP + H(+). This is Serine/threonine-protein kinase PEPKR2 (PEPKR2) from Arabidopsis thaliana (Mouse-ear cress).